The primary structure comprises 339 residues: WAT1-related protein At5g40210 (339 aa).

The next 10 helical transmembrane spans lie at 11–31, 42–62, 74–94, 104–124, 140–160, 168–188, 200–220, 233–253, 266–286, and 289–309; these read GWIL…NTLV, FVVL…LTFF, FSIL…QILG, TLSS…AVVF, VLGT…HGPM, WIIG…SYLV, VVVT…VSLL, FDIT…YYVI, LSMF…IFLG, and LYLG…MVLW. Residues 29–154 form the EamA domain; it reads TLVKAATSKG…LSIIGALVVT (126 aa).

The protein belongs to the drug/metabolite transporter (DMT) superfamily. Plant drug/metabolite exporter (P-DME) (TC 2.A.7.4) family.

The protein localises to the membrane. The chain is WAT1-related protein At5g40210 from Arabidopsis thaliana (Mouse-ear cress).